The chain runs to 59 residues: Large ribosomal subunit protein bL32 (59 aa).

A disordered region spans residues 1-20 (MAVPRNRHSNARKNIRRSHH).

The protein belongs to the bacterial ribosomal protein bL32 family.

In Chlamydia muridarum (strain MoPn / Nigg), this protein is Large ribosomal subunit protein bL32 (rpmF).